The primary structure comprises 116 residues: Venom protein 54.1 (116 aa).

An N-terminal signal peptide occupies residues 1–19 (MNFQVFSLIFFNFVYYCSC).

Post-translationally, contains 3 disulfide bonds. In terms of tissue distribution, expressed by the venom gland.

It is found in the secreted. In Lychas mucronatus (Chinese swimming scorpion), this protein is Venom protein 54.1.